Consider the following 377-residue polypeptide: Lactosylceramide 1,3-N-acetyl-beta-D-glucosaminyltransferase (377 aa).

The Cytoplasmic segment spans residues methionine 1–glutamine 14. Residues phenylalanine 15 to asparagine 35 form a helical; Signal-anchor for type II membrane protein membrane-spanning segment. The Lumenal segment spans residues asparagine 36–alanine 377. Residue asparagine 58 is glycosylated (N-linked (GlcNAc...) asparagine).

The protein belongs to the glycosyltransferase 31 family.

It localises to the golgi apparatus membrane. It carries out the reaction a beta-D-Gal-(1-&gt;4)-beta-D-Glc-(1&lt;-&gt;1)-Cer(d18:1(4E)) + UDP-N-acetyl-alpha-D-glucosamine = a beta-D-GlcNAc-(1-&gt;3)-beta-D-Gal-(1-&gt;4)-beta-D-Glc-(1&lt;-&gt;1)-Cer(d18:1(4E)) + UDP + H(+). The enzyme catalyses a neolactoside nLc4Cer(d18:1(4E)) + UDP-N-acetyl-alpha-D-glucosamine = a neolactoside IV(3)-beta-GlcNAc-nLc4Cer(d18:1(4E)) + UDP + H(+). It participates in protein modification; protein glycosylation. Functionally, beta-1,3-N-acetylglucosaminyltransferase that plays a key role in the synthesis of lacto- or neolacto-series carbohydrate chains on glycolipids, notably by participating in biosynthesis of HNK-1 and Lewis X carbohydrate structures. Has strong activity toward lactosylceramide (LacCer) and neolactotetraosylceramide (nLc(4)Cer; paragloboside), resulting in the synthesis of Lc(3)Cer and neolactopentaosylceramide (nLc(5)Cer), respectively. Probably plays a central role in regulating neolacto-series glycolipid synthesis during embryonic development. In Rattus norvegicus (Rat), this protein is Lactosylceramide 1,3-N-acetyl-beta-D-glucosaminyltransferase.